Here is a 273-residue protein sequence, read N- to C-terminus: Large ribosomal subunit protein uL2 (273 aa).

The interval 221–263 (RGTAMNPVDHPHGGGEGRNFGKHPVTPWGVQTKGKKTRHNKRT) is disordered. The segment covering 253-263 (KGKKTRHNKRT) has biased composition (basic residues).

This sequence belongs to the universal ribosomal protein uL2 family. Part of the 50S ribosomal subunit. Forms a bridge to the 30S subunit in the 70S ribosome.

Its function is as follows. One of the primary rRNA binding proteins. Required for association of the 30S and 50S subunits to form the 70S ribosome, for tRNA binding and peptide bond formation. It has been suggested to have peptidyltransferase activity; this is somewhat controversial. Makes several contacts with the 16S rRNA in the 70S ribosome. This is Large ribosomal subunit protein uL2 from Histophilus somni (strain 129Pt) (Haemophilus somnus).